We begin with the raw amino-acid sequence, 348 residues long: Isopentenyl-diphosphate delta-isomerase (348 aa).

A substrate-binding site is contributed by 9 to 10 (RK). FMN is bound by residues 68–70 (AMT), serine 98, and asparagine 127. Glutamine 157 serves as a coordination point for substrate. Glutamate 158 is a Mg(2+) binding site. FMN-binding positions include lysine 188, serine 213, threonine 218, and 286–287 (AG).

The protein belongs to the IPP isomerase type 2 family. Homooctamer. Dimer of tetramers. FMN is required as a cofactor. Requires NADPH as cofactor. Mg(2+) serves as cofactor.

Its subcellular location is the cytoplasm. The catalysed reaction is isopentenyl diphosphate = dimethylallyl diphosphate. Functionally, involved in the biosynthesis of isoprenoids. Catalyzes the 1,3-allylic rearrangement of the homoallylic substrate isopentenyl (IPP) to its allylic isomer, dimethylallyl diphosphate (DMAPP). The chain is Isopentenyl-diphosphate delta-isomerase from Limosilactobacillus reuteri (strain DSM 20016) (Lactobacillus reuteri).